The chain runs to 269 residues: tRNA pseudouridine synthase A (269 aa).

The Nucleophile role is filled by Asp51. Tyr109 provides a ligand contact to substrate.

Belongs to the tRNA pseudouridine synthase TruA family. Homodimer.

The catalysed reaction is uridine(38/39/40) in tRNA = pseudouridine(38/39/40) in tRNA. Functionally, formation of pseudouridine at positions 38, 39 and 40 in the anticodon stem and loop of transfer RNAs. The chain is tRNA pseudouridine synthase A from Haemophilus influenzae (strain 86-028NP).